Consider the following 424-residue polypeptide: 3-phosphoshikimate 1-carboxyvinyltransferase (424 aa).

The 3-phosphoshikimate site is built by Lys21, Ser22, and Arg26. Lys21 contacts phosphoenolpyruvate. Gly91 and Arg119 together coordinate phosphoenolpyruvate. 3-phosphoshikimate contacts are provided by Ser164, Gln166, Asp310, and Lys337. Gln166 lines the phosphoenolpyruvate pocket. The active-site Proton acceptor is Asp310. Phosphoenolpyruvate-binding residues include Arg341 and Arg382.

This sequence belongs to the EPSP synthase family. As to quaternary structure, monomer.

The protein resides in the cytoplasm. It catalyses the reaction 3-phosphoshikimate + phosphoenolpyruvate = 5-O-(1-carboxyvinyl)-3-phosphoshikimate + phosphate. The protein operates within metabolic intermediate biosynthesis; chorismate biosynthesis; chorismate from D-erythrose 4-phosphate and phosphoenolpyruvate: step 6/7. Functionally, catalyzes the transfer of the enolpyruvyl moiety of phosphoenolpyruvate (PEP) to the 5-hydroxyl of shikimate-3-phosphate (S3P) to produce enolpyruvyl shikimate-3-phosphate and inorganic phosphate. This Campylobacter hominis (strain ATCC BAA-381 / DSM 21671 / CCUG 45161 / LMG 19568 / NCTC 13146 / CH001A) protein is 3-phosphoshikimate 1-carboxyvinyltransferase.